Here is a 56-residue protein sequence, read N- to C-terminus: Large ribosomal subunit protein bL32 (56 aa).

The segment covering 1–16 (MAVQKNKKSRSKRGMR) has biased composition (basic residues). Positions 1 to 36 (MAVQKNKKSRSKRGMRRSHDSLSTPQLSVDSTSGEL) are disordered. The segment covering 21-34 (SLSTPQLSVDSTSG) has biased composition (polar residues).

The protein belongs to the bacterial ribosomal protein bL32 family.

The sequence is that of Large ribosomal subunit protein bL32 from Shewanella sediminis (strain HAW-EB3).